We begin with the raw amino-acid sequence, 527 residues long: Beta-glucosidase 19 (527 aa).

The first 21 residues, 1–21 (MKIPLLGLLLLISLVGSPTRA), serve as a signal peptide directing secretion. Residues glutamine 52 and histidine 155 each coordinate a beta-D-glucoside. The N-linked (GlcNAc...) asparagine glycan is linked to asparagine 183. 200–201 (NE) is a binding site for a beta-D-glucoside. The active-site Proton donor is glutamate 201. Cysteine 220 and cysteine 231 are disulfide-bonded. Positions 345 and 418 each coordinate a beta-D-glucoside. Glutamate 418 serves as the catalytic Nucleophile. Asparagine 462 carries an N-linked (GlcNAc...) asparagine glycan. Residues tryptophan 469, 476-477 (EW), and phenylalanine 485 contribute to the a beta-D-glucoside site. An N-linked (GlcNAc...) asparagine glycan is attached at asparagine 495. Positions 524-527 (HEEL) match the Prevents secretion from ER motif.

The protein belongs to the glycosyl hydrolase 1 family.

The protein localises to the endoplasmic reticulum lumen. The catalysed reaction is Hydrolysis of terminal, non-reducing beta-D-glucosyl residues with release of beta-D-glucose.. This Arabidopsis thaliana (Mouse-ear cress) protein is Beta-glucosidase 19.